The sequence spans 125 residues: NADH dehydrogenase [ubiquinone] 1 beta subcomplex subunit 8, mitochondrial (125 aa).

The N-terminal 29 residues, 1–29 (MAGRLSGVASRIMGGNGVVARSVGSSLRQ), are a transit peptide targeting the mitochondrion. Residues 78 to 98 (ALAWLSGGLGFFVGLGLLAVL) form a helical membrane-spanning segment.

This sequence belongs to the complex I NDUFB8 subunit family. Complex I is composed of at least 49 different subunits.

The protein resides in the mitochondrion inner membrane. Functionally, accessory subunit of the mitochondrial membrane respiratory chain NADH dehydrogenase (Complex I), that is believed not to be involved in catalysis. Complex I functions in the transfer of electrons from NADH to the respiratory chain. The immediate electron acceptor for the enzyme is believed to be ubiquinone. The protein is NADH dehydrogenase [ubiquinone] 1 beta subcomplex subunit 8, mitochondrial of Arabidopsis thaliana (Mouse-ear cress).